The chain runs to 246 residues: 23S rRNA (guanosine-2'-O-)-methyltransferase RlmB (246 aa).

3 residues coordinate S-adenosyl-L-methionine: Gly197, Ile217, and Leu226.

This sequence belongs to the class IV-like SAM-binding methyltransferase superfamily. RNA methyltransferase TrmH family. RlmB subfamily.

It is found in the cytoplasm. The enzyme catalyses guanosine(2251) in 23S rRNA + S-adenosyl-L-methionine = 2'-O-methylguanosine(2251) in 23S rRNA + S-adenosyl-L-homocysteine + H(+). Specifically methylates the ribose of guanosine 2251 in 23S rRNA. This chain is 23S rRNA (guanosine-2'-O-)-methyltransferase RlmB, found in Haemophilus influenzae (strain ATCC 51907 / DSM 11121 / KW20 / Rd).